A 610-amino-acid chain; its full sequence is UvrABC system protein C (610 aa).

The region spanning 16–94 (SQPGVYRMYD…IKLYQPRYNV (79 aa)) is the GIY-YIG domain. Residues 204–239 (DQVLTQLISRMETASQNLEFEEAARIRDQIQAVRRV) enclose the UVR domain.

The protein belongs to the UvrC family. In terms of assembly, interacts with UvrB in an incision complex.

It is found in the cytoplasm. Its function is as follows. The UvrABC repair system catalyzes the recognition and processing of DNA lesions. UvrC both incises the 5' and 3' sides of the lesion. The N-terminal half is responsible for the 3' incision and the C-terminal half is responsible for the 5' incision. The sequence is that of UvrABC system protein C from Escherichia coli O139:H28 (strain E24377A / ETEC).